Here is a 340-residue protein sequence, read N- to C-terminus: tRNA-cytidine(32) 2-sulfurtransferase (340 aa).

The short motif at 74 to 79 is the PP-loop motif element; the sequence is SGGKDS. 3 residues coordinate [4Fe-4S] cluster: C149, C152, and C240.

The protein belongs to the TtcA family. Homodimer. The cofactor is Mg(2+). It depends on [4Fe-4S] cluster as a cofactor.

The protein localises to the cytoplasm. The enzyme catalyses cytidine(32) in tRNA + S-sulfanyl-L-cysteinyl-[cysteine desulfurase] + AH2 + ATP = 2-thiocytidine(32) in tRNA + L-cysteinyl-[cysteine desulfurase] + A + AMP + diphosphate + H(+). The protein operates within tRNA modification. Functionally, catalyzes the ATP-dependent 2-thiolation of cytidine in position 32 of tRNA, to form 2-thiocytidine (s(2)C32). The sulfur atoms are provided by the cysteine/cysteine desulfurase (IscS) system. This is tRNA-cytidine(32) 2-sulfurtransferase from Burkholderia ambifaria (strain MC40-6).